The sequence spans 359 residues: MRQILIAVAVALTVSILLTPALIRLFTRQGFGHHTREDGPPTHHAKRGTPSMGGVAIIAGIWAGYLGTHLAGLAFDGEGISASGLLVLGLATVLGIVGFLDDLIKIRRSRNLGLNKTAKTIGQVAAAVLFGVLALGFRNANGLTPASADLSYVREIATVTLAPGLFVLFCVVVVSAWSNAVNFTDGLDGLAAGSMAMVTAAYVLITFWQYRNACVTAPGLGCYNVRDPLDLAIVAAATAGACIGFLWWNAAPAKIFMGDTGSLALGGIIAGISVTSRTEILAVVLGSLFVAEVSSVVLQILTFRTTGRRVFRMAPFHHHFELAGWAETTVIIRFWLLTAIACGLGVALFYGEWLAAIGA.

Helical transmembrane passes span 3–23 (QILI…PALI), 55–75 (VAII…GLAF), 80–100 (ISAS…VGFL), 117–137 (TAKT…ALGF), 156–176 (IATV…VVSA), 187–207 (LDGL…LITF), 231–251 (LAIV…WNAA), 255–275 (IFMG…ISVT), 280–300 (ILAV…VLQI), and 334–354 (FWLL…GEWL).

Belongs to the glycosyltransferase 4 family. MraY subfamily. Requires Mg(2+) as cofactor.

The protein localises to the cell membrane. It catalyses the reaction UDP-N-acetyl-alpha-D-muramoyl-L-alanyl-gamma-D-glutamyl-meso-2,6-diaminopimeloyl-D-alanyl-D-alanine + di-trans,octa-cis-undecaprenyl phosphate = di-trans,octa-cis-undecaprenyl diphospho-N-acetyl-alpha-D-muramoyl-L-alanyl-D-glutamyl-meso-2,6-diaminopimeloyl-D-alanyl-D-alanine + UMP. It functions in the pathway cell wall biogenesis; peptidoglycan biosynthesis. Functionally, catalyzes the initial step of the lipid cycle reactions in the biosynthesis of the cell wall peptidoglycan: transfers peptidoglycan precursor phospho-MurNAc-pentapeptide from UDP-MurNAc-pentapeptide onto the lipid carrier undecaprenyl phosphate, yielding undecaprenyl-pyrophosphoryl-MurNAc-pentapeptide, known as lipid I. In Mycolicibacterium paratuberculosis (strain ATCC BAA-968 / K-10) (Mycobacterium paratuberculosis), this protein is Phospho-N-acetylmuramoyl-pentapeptide-transferase.